A 185-amino-acid polypeptide reads, in one-letter code: Photosystem I assembly protein Ycf4 (185 aa).

2 consecutive transmembrane segments (helical) span residues 20–40 (GNFFWACILFLGSLGFLSVGA) and 57–77 (ILFFPQGVVMSFYGIAGLFIS).

Belongs to the Ycf4 family.

Its subcellular location is the plastid. It is found in the chloroplast thylakoid membrane. Functionally, seems to be required for the assembly of the photosystem I complex. In Lolium perenne (Perennial ryegrass), this protein is Photosystem I assembly protein Ycf4.